The following is a 67-amino-acid chain: AGAPVYLAAXXXYLTAEILXLAGNAARDNKKSRIIPRHVQLAVXXXXXLNKLLGNVTIAQGGVLPNI.

Q60 is modified (N5-methylglutamine).

It belongs to the histone H2A family. The nucleosome is a histone octamer containing two molecules each of H2A, H2B, H3 and H4 assembled in one H3-H4 heterotetramer and two H2A-H2B heterodimers. The octamer wraps approximately 147 bp of DNA.

The protein resides in the nucleus. The protein localises to the chromosome. Functionally, core component of nucleosome. Nucleosomes wrap and compact DNA into chromatin, limiting DNA accessibility to the cellular machineries which require DNA as a template. Histones thereby play a central role in transcription regulation, DNA repair, DNA replication and chromosomal stability. DNA accessibility is regulated via a complex set of post-translational modifications of histones, also called histone code, and nucleosome remodeling. The chain is Histone H2A from Olisthodiscus luteus (Marine phytoflagellate).